A 207-amino-acid chain; its full sequence is Intraflagellar transport protein 43 homolog A (207 aa).

The disordered stretch occupies residues methionine 1–valine 104.

The protein belongs to the IFT43 family. Component of IFT complex A.

In terms of biological role, component of IFT complex A (IFT-A) involved in retrograde ciliary transport along microtubules from the ciliary tip to the base. This chain is Intraflagellar transport protein 43 homolog A (ift43a), found in Salmo salar (Atlantic salmon).